The chain runs to 316 residues: Pantothenate kinase (316 aa).

ATP is bound at residue 95 to 102; that stretch reads GSVAVGKS.

Belongs to the prokaryotic pantothenate kinase family.

Its subcellular location is the cytoplasm. The catalysed reaction is (R)-pantothenate + ATP = (R)-4'-phosphopantothenate + ADP + H(+). The protein operates within cofactor biosynthesis; coenzyme A biosynthesis; CoA from (R)-pantothenate: step 1/5. In Photorhabdus laumondii subsp. laumondii (strain DSM 15139 / CIP 105565 / TT01) (Photorhabdus luminescens subsp. laumondii), this protein is Pantothenate kinase.